A 310-amino-acid chain; its full sequence is Protoheme IX farnesyltransferase 2 (310 aa).

9 helical membrane passes run Ile-21–Gly-41, Ile-46–Leu-66, Phe-99–Thr-119, Trp-125–Leu-145, Ile-153–Thr-173, Gly-180–Leu-200, Val-226–Leu-246, Val-256–Val-276, and Ala-284–Val-304.

The protein belongs to the UbiA prenyltransferase family. Protoheme IX farnesyltransferase subfamily.

The protein resides in the cell membrane. It catalyses the reaction heme b + (2E,6E)-farnesyl diphosphate + H2O = Fe(II)-heme o + diphosphate. The protein operates within porphyrin-containing compound metabolism; heme O biosynthesis; heme O from protoheme: step 1/1. In terms of biological role, converts heme B (protoheme IX) to heme O by substitution of the vinyl group on carbon 2 of heme B porphyrin ring with a hydroxyethyl farnesyl side group. This Cenarchaeum symbiosum (strain A) protein is Protoheme IX farnesyltransferase 2.